The sequence spans 375 residues: Erythronate-4-phosphate dehydrogenase (375 aa).

Substrate is bound by residues S45 and T67. Residue D147 participates in NAD(+) binding. R209 is a catalytic residue. D233 contacts NAD(+). E238 is an active-site residue. The active-site Proton donor is the H255. Residue G258 participates in NAD(+) binding. Y259 lines the substrate pocket.

Belongs to the D-isomer specific 2-hydroxyacid dehydrogenase family. PdxB subfamily. As to quaternary structure, homodimer.

It localises to the cytoplasm. The catalysed reaction is 4-phospho-D-erythronate + NAD(+) = (R)-3-hydroxy-2-oxo-4-phosphooxybutanoate + NADH + H(+). Its pathway is cofactor biosynthesis; pyridoxine 5'-phosphate biosynthesis; pyridoxine 5'-phosphate from D-erythrose 4-phosphate: step 2/5. Its function is as follows. Catalyzes the oxidation of erythronate-4-phosphate to 3-hydroxy-2-oxo-4-phosphonooxybutanoate. The polypeptide is Erythronate-4-phosphate dehydrogenase (Shewanella amazonensis (strain ATCC BAA-1098 / SB2B)).